Consider the following 250-residue polypeptide: Cruxrhodopsin-1 (250 aa).

Residues 1 to 9 (MPEPGSEAI) lie on the Extracellular side of the membrane. A helical membrane pass occupies residues 10–27 (WLWLGTAGMFLGMLYFIA). Residues 28–41 (RGWGETDSRRQKFY) lie on the Cytoplasmic side of the membrane. The helical transmembrane segment at 42–60 (IATILITAIAFVNYLAMAL) threads the bilayer. At 61–77 (GFGLTIVEFAGEEHPIY) the chain is on the extracellular side. Residues 78–94 (WARYSDWLFTTPLLLYD) form a helical membrane-spanning segment. The Cytoplasmic segment spans residues 95 to 105 (LGLLAGADRNT). A helical membrane pass occupies residues 106 to 125 (ITSLVSLDVLMIGTGLVATL). The Extracellular segment spans residues 126 to 138 (SPGSGVLSAGAER). A helical transmembrane segment spans residues 139–158 (LVWWGISTAFLLVLLYFLFS). The Cytoplasmic segment spans residues 159–176 (SLSGRVADLPSDTRSTFK). Residues 177 to 195 (TLRNLVTVVWLVYPVWWLI) traverse the membrane as a helical segment. The Extracellular segment spans residues 196–207 (GTEGIGLVGIGI). Residues 208–227 (ETAGFMVIDLTAKVGFGIIL) traverse the membrane as a helical segment. The residue at position 220 (lysine 220) is an N6-(retinylidene)lysine. Topologically, residues 228–250 (LRSHGVLDGAAETTGTGATPADD) are cytoplasmic.

It belongs to the archaeal/bacterial/fungal opsin family. As to quaternary structure, homotrimer.

Its subcellular location is the cell membrane. Its function is as follows. Light-driven proton pump. The sequence is that of Cruxrhodopsin-1 (cop1) from Haloarcula argentinensis.